The chain runs to 450 residues: Phosphoglucosamine mutase (450 aa).

Residue Ser102 is the Phosphoserine intermediate of the active site. Residues Ser102, Asp243, Asp245, and Asp247 each contribute to the Mg(2+) site. Position 102 is a phosphoserine (Ser102).

It belongs to the phosphohexose mutase family. Mg(2+) serves as cofactor. Activated by phosphorylation.

The enzyme catalyses alpha-D-glucosamine 1-phosphate = D-glucosamine 6-phosphate. Its function is as follows. Catalyzes the conversion of glucosamine-6-phosphate to glucosamine-1-phosphate. The polypeptide is Phosphoglucosamine mutase (Rhizobium etli (strain CIAT 652)).